Reading from the N-terminus, the 943-residue chain is Neutral alpha-glucosidase AB (943 aa).

An N-terminal signal peptide occupies residues 1–23 (MRKLVILIILSIVCSLFIGSIES). Residues 186–231 (FEPISDKPQPLPPKEKKSEEENKEANQEEDNNNNNNDNNEEQQVST) are disordered. Over residues 198–211 (PKEKKSEEENKEAN) the composition is skewed to basic and acidic residues. D540 acts as the Nucleophile in catalysis. The active site involves E543. The active-site Proton donor is D617. N-linked (GlcNAc...) asparagine glycosylation is found at N878, N887, and N907.

It belongs to the glycosyl hydrolase 31 family.

The protein localises to the endoplasmic reticulum. It localises to the golgi apparatus. It catalyses the reaction N(4)-(alpha-D-Glc-(1-&gt;3)-alpha-D-Man-(1-&gt;2)-alpha-D-Man-(1-&gt;2)-alpha-D-Man-(1-&gt;3)-[alpha-D-Man-(1-&gt;2)-alpha-D-Man-(1-&gt;3)-[alpha-D-Man-(1-&gt;2)-alpha-D-Man-(1-&gt;6)]-alpha-D-Man-(1-&gt;6)]-beta-D-Man-(1-&gt;4)-beta-D-GlcNAc-(1-&gt;4)-beta-D-GlcNAc)-L-asparaginyl-[protein] + H2O = N(4)-(alpha-D-Man-(1-&gt;2)-alpha-D-Man-(1-&gt;2)-alpha-D-Man-(1-&gt;3)-[alpha-D-Man-(1-&gt;2)-alpha-D-Man-(1-&gt;3)-[alpha-D-Man-(1-&gt;2)-alpha-D-Man-(1-&gt;6)]-alpha-D-Man-(1-&gt;6)]-beta-D-Man-(1-&gt;4)-beta-D-GlcNAc-(1-&gt;4)-beta-D-GlcNAc)-L-asparaginyl-[protein] (N-glucan mannose isomer 9A1,2,3B1,2,3) + beta-D-glucose. The catalysed reaction is N(4)-(alpha-D-Glc-(1-&gt;3)-alpha-D-Glc-(1-&gt;3)-alpha-D-Man-(1-&gt;2)-alpha-D-Man-(1-&gt;2)-alpha-D-Man-(1-&gt;3)-[alpha-D-Man-(1-&gt;2)-alpha-D-Man-(1-&gt;3)-[alpha-D-Man-(1-&gt;2)-alpha-D-Man-(1-&gt;6)]-alpha-D-Man-(1-&gt;6)]-beta-D-Man-(1-&gt;4)-beta-D-GlcNAc-(1-&gt;4)-beta-D-GlcNAc)-L-asparaginyl-[protein] + H2O = N(4)-(alpha-D-Glc-(1-&gt;3)-alpha-D-Man-(1-&gt;2)-alpha-D-Man-(1-&gt;2)-alpha-D-Man-(1-&gt;3)-[alpha-D-Man-(1-&gt;2)-alpha-D-Man-(1-&gt;3)-[alpha-D-Man-(1-&gt;2)-alpha-D-Man-(1-&gt;6)]-alpha-D-Man-(1-&gt;6)]-beta-D-Man-(1-&gt;4)-beta-D-GlcNAc-(1-&gt;4)-beta-D-GlcNAc)-L-asparaginyl-[protein] + beta-D-glucose. The protein operates within glycan metabolism; N-glycan metabolism. In terms of biological role, cleaves sequentially the 2 innermost alpha-1,3-linked glucose residues from N-linked oligosaccharides on newly synthesized glycoproteins. This Dictyostelium discoideum (Social amoeba) protein is Neutral alpha-glucosidase AB (modA).